Reading from the N-terminus, the 232-residue chain is Orotate phosphoribosyltransferase (232 aa).

5-phospho-alpha-D-ribose 1-diphosphate-binding positions include arginine 107, lysine 108, lysine 111, and 133–141; that span reads EDLTTDGGS. Residue threonine 137 coordinates orotate.

This sequence belongs to the purine/pyrimidine phosphoribosyltransferase family. PyrE subfamily. Homodimer. The cofactor is Mg(2+).

The catalysed reaction is orotidine 5'-phosphate + diphosphate = orotate + 5-phospho-alpha-D-ribose 1-diphosphate. It participates in pyrimidine metabolism; UMP biosynthesis via de novo pathway; UMP from orotate: step 1/2. Catalyzes the transfer of a ribosyl phosphate group from 5-phosphoribose 1-diphosphate to orotate, leading to the formation of orotidine monophosphate (OMP). The protein is Orotate phosphoribosyltransferase of Cereibacter sphaeroides (strain ATCC 17023 / DSM 158 / JCM 6121 / CCUG 31486 / LMG 2827 / NBRC 12203 / NCIMB 8253 / ATH 2.4.1.) (Rhodobacter sphaeroides).